A 144-amino-acid polypeptide reads, in one-letter code: Protein MIX23 (144 aa).

At Ala-2 the chain carries N-acetylalanine. A coiled-coil region spans residues 82 to 120 (VKNLREEREKNLDDLTLLKQLRKEQTKLKWMQSELNVEE). An N6-acetyllysine modification is found at Lys-100.

Belongs to the MIX23 family.

The protein is Protein MIX23 of Homo sapiens (Human).